Consider the following 252-residue polypeptide: Small ribosomal subunit protein uS2A (252 aa).

At Ser2 the chain carries N-acetylserine. The disordered stretch occupies residues Glu209–Trp252. Over residues Ala218–Trp252 the composition is skewed to acidic residues.

This sequence belongs to the universal ribosomal protein uS2 family. As to quaternary structure, component of the small ribosomal subunit. Mature ribosomes consist of a small (40S) and a large (60S) subunit. The 40S subunit contains about 33 different proteins and 1 molecule of RNA (18S). The 60S subunit contains about 49 different proteins and 3 molecules of RNA (25S, 5.8S and 5S). Interacts with RPS21.

The protein localises to the cytoplasm. Functionally, required for the assembly and/or stability of the 40S ribosomal subunit. Required for the processing of the 20S rRNA-precursor to mature 18S rRNA in a late step of the maturation of 40S ribosomal subunits. This Saccharomyces cerevisiae (strain RM11-1a) (Baker's yeast) protein is Small ribosomal subunit protein uS2A.